The primary structure comprises 124 residues: Large ribosomal subunit protein bL19 (124 aa).

The protein belongs to the bacterial ribosomal protein bL19 family.

This protein is located at the 30S-50S ribosomal subunit interface and may play a role in the structure and function of the aminoacyl-tRNA binding site. This chain is Large ribosomal subunit protein bL19, found in Dinoroseobacter shibae (strain DSM 16493 / NCIMB 14021 / DFL 12).